A 120-amino-acid chain; its full sequence is MGIEMRCQDRRILLPSLLLLILMIGGVQATMKLCGRKLPETLSKLCVYGFNAMTKRTLDPVNFNQIDGFEDRSLLERLLSDSSVQMLKTRRLRDGVFDECCLKSCTMDEVLRYCAAKPRT.

Positions 1–29 are cleaved as a signal peptide; the sequence is MGIEMRCQDRRILLPSLLLLILMIGGVQA. Cystine bridges form between C34–C101, C46–C114, and C100–C105. The propeptide at 51–89 is connecting peptide; it reads NAMTKRTLDPVNFNQIDGFEDRSLLERLLSDSSVQMLKT.

Belongs to the insulin family. In terms of assembly, heterodimer of a B chain and an A chain linked by two disulfide bonds. As to expression, expressed at a high level in seven cells of each larval brain hemisphere that may correspond to neurosecretory cells.

The protein localises to the secreted. Functionally, possible ligand of InR/insulin-like receptor. This is Insulin-like peptide 3 from Drosophila melanogaster (Fruit fly).